Here is a 247-residue protein sequence, read N- to C-terminus: Cell division protein ZapD (247 aa).

Belongs to the ZapD family. As to quaternary structure, interacts with FtsZ.

It localises to the cytoplasm. Its function is as follows. Cell division factor that enhances FtsZ-ring assembly. Directly interacts with FtsZ and promotes bundling of FtsZ protofilaments, with a reduction in FtsZ GTPase activity. The chain is Cell division protein ZapD from Salmonella agona (strain SL483).